We begin with the raw amino-acid sequence, 233 residues long: MNMQILWIIIAIICSYLIGAIPFGYIIPKLFKGIDIREHGSKNVGSTNVLRVLGAKYGIPTFLLDCFKGALPIIIIRYMLGMPELFLISDTYDISIVFGAAAAIGHIKSIYIGFKGGKAVATGVGAVIAINPIIGLSGIGLFFIVAFSTKYVSIGSVVASFSVAVMMWIGVLIKEIWIPVPNLTISYESQIINLVAISLIVLLIIYMHKKNFIRLMNGTENKIGQKKIQNITK.

The next 5 membrane-spanning stretches (helical) occupy residues 7-27 (WIIIAIICSYLIGAIPFGYII), 94-114 (ISIVFGAAAAIGHIKSIYIGF), 127-147 (VIAINPIIGLSGIGLFFIVAF), 153-173 (SIGSVVASFSVAVMMWIGVLI), and 185-205 (ISYESQIINLVAISLIVLLII).

Belongs to the PlsY family. As to quaternary structure, probably interacts with PlsX.

It is found in the cell membrane. It carries out the reaction an acyl phosphate + sn-glycerol 3-phosphate = a 1-acyl-sn-glycero-3-phosphate + phosphate. Its pathway is lipid metabolism; phospholipid metabolism. Its function is as follows. Catalyzes the transfer of an acyl group from acyl-phosphate (acyl-PO(4)) to glycerol-3-phosphate (G3P) to form lysophosphatidic acid (LPA). This enzyme utilizes acyl-phosphate as fatty acyl donor, but not acyl-CoA or acyl-ACP. This Acholeplasma laidlawii protein is Glycerol-3-phosphate acyltransferase.